Here is a 380-residue protein sequence, read N- to C-terminus: Succinyl-diaminopimelate desuccinylase (380 aa).

His-69 provides a ligand contact to Zn(2+). Asp-71 is a catalytic residue. Asp-102 lines the Zn(2+) pocket. The active-site Proton acceptor is the Glu-135. 3 residues coordinate Zn(2+): Glu-136, Glu-164, and His-353.

Belongs to the peptidase M20A family. DapE subfamily. As to quaternary structure, homodimer. Zn(2+) serves as cofactor. Requires Co(2+) as cofactor.

The catalysed reaction is N-succinyl-(2S,6S)-2,6-diaminopimelate + H2O = (2S,6S)-2,6-diaminopimelate + succinate. The protein operates within amino-acid biosynthesis; L-lysine biosynthesis via DAP pathway; LL-2,6-diaminopimelate from (S)-tetrahydrodipicolinate (succinylase route): step 3/3. Catalyzes the hydrolysis of N-succinyl-L,L-diaminopimelic acid (SDAP), forming succinate and LL-2,6-diaminopimelate (DAP), an intermediate involved in the bacterial biosynthesis of lysine and meso-diaminopimelic acid, an essential component of bacterial cell walls. In Cereibacter sphaeroides (strain ATCC 17025 / ATH 2.4.3) (Rhodobacter sphaeroides), this protein is Succinyl-diaminopimelate desuccinylase.